We begin with the raw amino-acid sequence, 200 residues long: Ras-related protein Rab-10 (200 aa).

The GTP site is built by Ser18, Gly19, Val20, Gly21, Lys22, Thr23, Cys24, Asn35, Thr36, Ser40, and Thr41. Thr23 serves as a coordination point for Mg(2+). 2 short sequence motifs (switch) span residues 32-46 (DAFNTTFISTIEIDF) and 64-81 (DTAGQERFHTITTSYYRG). 2 residues coordinate Mg(2+): Thr41 and Asp64. Gly67 serves as a coordination point for GTP. Position 73 is a phosphothreonine (Thr73). Position 102 is an N6-acetyllysine (Lys102). A Glycyl lysine isopeptide (Lys-Gly) (interchain with G-Cter in ubiquitin) cross-link involves residue Lys102. GTP-binding residues include Asn122, Lys123, Asp125, and Met126. Lys136 is covalently cross-linked (Glycyl lysine isopeptide (Lys-Gly) (interchain with G-Cter in ubiquitin)). GTP is bound by residues Ser152, Ala153, and Lys154. A Glycyl lysine isopeptide (Lys-Gly) (interchain with G-Cter in ubiquitin) cross-link involves residue Lys154. 2 S-geranylgeranyl cysteine lipidation sites follow: Cys199 and Cys200.

This sequence belongs to the small GTPase superfamily. Rab family. Interacts with MYO5A; mediates the transport to the plasma membrane of SLC2A4/GLUT4 storage vesicles. Interacts with GDI1 and with GDI2; negatively regulates RAB10 association with membranes and activation. Interacts (GDP-bound form) with LLGL1; the interaction is direct and promotes RAB10 association with membranes and activation through competition with the Rab inhibitor GDI1. Interacts with EXOC4; probably associates with the exocyst. Interacts (GTP-bound form) with MICALCL, MICAL1, MICAL3, EHBP1 and EHBP1L1; at least in case of MICAL1 two molecules of RAB10 can bind to one molecule of MICAL1. Interacts with TBC1D13. Interacts with SEC16A. Interacts with CHM. Interacts with LRRK2; interaction facilitates phosphorylation of Thr-73. Interacts with RILPL1 and RILPL2 when phosphorylated on Thr-73. Interacts with TBC1D21. Interacts with MARCKS. It depends on Mg(2+) as a cofactor. Post-translationally, phosphorylation of Thr-73 in the switch II region by LRRK2 prevents the association of RAB regulatory proteins, including CHM and RAB GDP dissociation inhibitors GDI1 and GDI2. Phosphorylation of Thr-73 by LRRK2 is stimulated by RAB29 and RAB32. Phosphorylation by LRRK2 is required for localization to stressed lysosomes. Highest levels in neural and muscle tissues.

The protein localises to the cytoplasmic vesicle membrane. It localises to the golgi apparatus. Its subcellular location is the trans-Golgi network membrane. It is found in the endosome membrane. The protein resides in the recycling endosome membrane. The protein localises to the cytoplasmic vesicle. It localises to the phagosome membrane. Its subcellular location is the cell projection. It is found in the cilium. The protein resides in the endoplasmic reticulum membrane. The protein localises to the cytoplasm. It localises to the perinuclear region. Its subcellular location is the lysosome. The enzyme catalyses GTP + H2O = GDP + phosphate + H(+). With respect to regulation, regulated by guanine nucleotide exchange factors (GEFs) DENND4C and RABIF which promote the exchange of bound GDP for free GTP. Regulated by GTPase activating proteins (GAPs) including TBC1D21 which increase the GTP hydrolysis activity. Inhibited by GDP dissociation inhibitors GDI1 and GDI2 which prevent Rab-GDP dissociation. The small GTPases Rab are key regulators of intracellular membrane trafficking, from the formation of transport vesicles to their fusion with membranes. Rabs cycle between an inactive GDP-bound form and an active GTP-bound form that is able to recruit to membranes different set of downstream effectors directly responsible for vesicle formation, movement, tethering and fusion. That Rab is mainly involved in the biosynthetic transport of proteins from the Golgi to the plasma membrane. Regulates, for instance, SLC2A4/GLUT4 glucose transporter-enriched vesicles delivery to the plasma membrane. In parallel, it regulates the transport of TLR4, a toll-like receptor to the plasma membrane and therefore may be important for innate immune response. Also plays a specific role in asymmetric protein transport to the plasma membrane. In neurons, it is involved in axonogenesis through regulation of vesicular membrane trafficking toward the axonal plasma membrane. In epithelial cells, it regulates transport from the Golgi to the basolateral membrane. May play a role in the basolateral recycling pathway and in phagosome maturation. May play a role in endoplasmic reticulum dynamics and morphology controlling tubulation along microtubules and tubules fusion. Together with LRRK2, RAB8A, and RILPL1, it regulates ciliogenesis. When phosphorylated by LRRK2 on Thr-73, it binds RILPL1 and inhibits ciliogenesis. Participates in the export of a subset of neosynthesized proteins through a Rab8-Rab10-Rab11-dependent endososomal export route. Targeted to and stabilized on stressed lysosomes through LRRK2 phosphorylation where it promotes the extracellular release of lysosomal content through EHBP1 and EHNP1L1 effector proteins. The polypeptide is Ras-related protein Rab-10 (Rattus norvegicus (Rat)).